Here is a 794-residue protein sequence, read N- to C-terminus: Protein sel-1 homolog 1 (794 aa).

The signal sequence occupies residues 1 to 21; the sequence is MRVRIGLTLLLCAVLLSLASA. A disordered region spans residues 21–50; it reads ASSDEEGSQDESLDSKTTLTSDESVKDHTT. The interval 22–737 is interaction with ERLEC1, OS9 and SYVN1; sequence SSDEEGSQDE…DMFTQLDMDQ (716 aa). Residues 22 to 738 are Lumenal-facing; it reads SSDEEGSQDE…MFTQLDMDQL (717 aa). Acidic residues predominate over residues 23 to 32; the sequence is SDEEGSQDES. S63 carries the phosphoserine modification. Acidic residues predominate over residues 64–77; sequence EESELESSIQEEED. A disordered region spans residues 64–109; the sequence is EESELESSIQEEEDSLKSQEGESVTEDISFLESPNPENKDYEEPKK. A Fibronectin type-II domain is found at 122–170; the sequence is AHGEPCHFPFLFLDKEYDECTSDGREDGRLWCATTYDYKADEKWGFCET. 2 disulfides stabilise this stretch: C127-C153 and C141-C168. Sel1-like repeat units follow at residues 183-218, 219-254, 255-290, 291-326, 373-409, 410-446, 447-482, 483-518, and 519-554; these read AEMMYQTGMKILNGSNKKSQKREAYRYLQKAASMNH, TKALERVSYALLFGDYLPQNIQAAREMFEKLTEEGS, PKGQTALGFLYASGLGVNSSQAKALVYYTFGALGGN, LIAHMVLGYRYWAGIGVLQSCESALTHYRLVANHVA, VQAQVGLGQLHLHGGRGVEQNHQRAFDYFNLAANAGN, SHAMAFLGKMYSEGSDIVPQSNETALHYFKKAADMGN, PVGQSGLGMAYLYGRGVQVNYDLALKYFQKAAEQGW, VDGQLQLGSMYYNGIGVKRDYKQALKYFNLASQGGH, and ILAFYNLAQMHASGTGVMRSCHTAVELFKNVCERGR. N195 and N217 each carry an N-linked (GlcNAc...) asparagine glycan. N272 carries an N-linked (GlcNAc...) asparagine glycan. Positions 352 to 537 are important for homodimerization and oligomerization; the sequence is NSGMLEEDLI…MHASGTGVMR (186 aa). Residue N431 is glycosylated (N-linked (GlcNAc...) asparagine). N608 carries an N-linked (GlcNAc...) asparagine glycan. Sel1-like repeat units follow at residues 627-662 and 664-699; these read TVARIKLGDYHFYGFGTDVDYETAFIHYRLASEQQH and AQAMFNLGYMHEKGLGIKQDIHLAKRFYDMAAEASP. The interval 643–723 is interaction with SYVN1; it reads TDVDYETAFI…VVYFLQYIRE (81 aa). The mediates retention in the endoplasmic reticulum stretch occupies residues 738-794; the sequence is LLGPEWDLYLMTIIALLLGTVIAYRQRQHQDMPAPRPPGPRPAPPQQEGPPEQQPPQ. Residues 739-759 traverse the membrane as a helical segment; sequence LGPEWDLYLMTIIALLLGTVI. The Cytoplasmic portion of the chain corresponds to 760–794; sequence AYRQRQHQDMPAPRPPGPRPAPPQQEGPPEQQPPQ. Residues 766–794 form a disordered region; the sequence is HQDMPAPRPPGPRPAPPQQEGPPEQQPPQ. A compositionally biased stretch (pro residues) spans 771–794; sequence APRPPGPRPAPPQQEGPPEQQPPQ.

This sequence belongs to the sel-1 family. As to quaternary structure, homodimer and homooligomer. May form a complex with ERLEC1, HSPA5, OS9, and SYVN1. Interacts with FOXRED2 and EDEM1. Interacts with LPL. Interacts with LMF1; may stabilize the complex formed by LPL and LMF1 and thereby promote the export of LPL dimers. Component of the HRD1 complex, which comprises at least SYNV1/HRD1, DERL1/2, FAM8A1, HERPUD1/HERP, OS9, SEL1L and UBE2J1. SYNV1 assembles with SEL1L and FAM8A1 through its transmembrane domains, but interaction with its cytoplasmic domain is required to confer stability to FAM8A1 and enhance recruitment of HERPUD1. The interaction with SYNV1/HRD1 is direct. In terms of assembly, (Microbial infection) Interacts with human cytomegalovirus protein UL148. Post-translationally, N-glycosylated. As to expression, highly expressed in pancreas.

The protein localises to the endoplasmic reticulum membrane. In terms of biological role, plays a role in the endoplasmic reticulum quality control (ERQC) system also called ER-associated degradation (ERAD) involved in ubiquitin-dependent degradation of misfolded endoplasmic reticulum proteins. Enhances SYVN1 stability. Plays a role in LPL maturation and secretion. Required for normal differentiation of the pancreas epithelium, and for normal exocrine function and survival of pancreatic cells. May play a role in Notch signaling. This is Protein sel-1 homolog 1 from Homo sapiens (Human).